The following is a 176-amino-acid chain: Protein tyrosine phosphatase PRL-1 (176 aa).

One can recognise a Tyrosine-protein phosphatase domain in the interval 13 to 165; sequence GESDAVVFRF…YKPRHQEGNE (153 aa). Cysteine 52 and cysteine 107 form a disulfide bridge. The Proton donor role is filled by aspartate 75. The active-site Phosphocysteine intermediate is the cysteine 107. Residue 109 to 113 participates in substrate binding; that stretch reads AGLGR. A Cysteine methyl ester modification is found at cysteine 173. Residue cysteine 173 is the site of S-farnesyl cysteine attachment. Residues 174-176 constitute a propeptide, removed in mature form; that stretch reads AVM.

This sequence belongs to the protein-tyrosine phosphatase family.

Its subcellular location is the flagellar pocket. The enzyme catalyses O-phospho-L-tyrosyl-[protein] + H2O = L-tyrosyl-[protein] + phosphate. Its activity is regulated as follows. Activated in a reduced environment which promotes the reduction of the disulfide bond between the regulatory Cys-52 and the catalytic Cys-107 residues. Inhibited by sodium orthovanadate. Has protein tyrosine phosphatase activity. The polypeptide is Protein tyrosine phosphatase PRL-1 (Trypanosoma cruzi (strain CL Brener)).